Reading from the N-terminus, the 525-residue chain is uncharacterized protein (525 aa).

The N-terminal stretch at 1–21 is a signal peptide; that stretch reads MLECLSALLVLFAGGGGSVLA. The Extracellular portion of the chain corresponds to 22–448; that stretch reads AVQSKTVADP…ISAASQLDKR (427 aa). A disordered region spans residues 242–264; that stretch reads KVSSENCSKDTDDKSGSKKERNT. Residues 449 to 469 form a helical membrane-spanning segment; the sequence is IFIFTAITVSITTLMMLGFSY. Topologically, residues 470 to 525 are cytoplasmic; sequence RSRVSFRDHSIDDSDDDNDWSDDEVEFDEEYFYSLPVSIPEKGISLDKMAQQLGVE.

It localises to the membrane. This is an uncharacterized protein from Saccharomyces cerevisiae (strain ATCC 204508 / S288c) (Baker's yeast).